A 330-amino-acid chain; its full sequence is MAVSDHHCGGGGRSWRFAVACGVLSRCVKAEAAAAANGRHRHHPTMLLMPGADVEPDVREEAAAAAQLKIMYGGRMLVFDDFFPAGGAVVELVRAAARAGQDVRRAGAARRRVGDSRGLDAGLPVVRKVSLQRFVEKRRRMRVYHILYTDKSSHHVPGPGRYRSWQCRIIIAAVAGAGGFVVACGVLSRCVKAEAAAAAANGRRHHHHHHTTMLLMPGADVEPDVREEAAAAAQLKIMYGGRMLVFDDFFPAGGAVVELVRAAARAGRDDDGARARRRPAGGEEGVAAAVRGEEKSQAARGDGAVHTRHSPPMLPARTPGSGRTDDAAFY.

In terms of domain architecture, Tify 1 spans 61–97 (EAAAAAQLKIMYGGRMLVFDDFFPAGGAVVELVRAAA). The Jas motif lies at 124 to 142 (PVVRKVSLQRFVEKRRRMR). The Nuclear localization signal signature appears at 126–133 (VRKVSLQR). Positions 228–264 (EAAAAAQLKIMYGGRMLVFDDFFPAGGAVVELVRAAA) constitute a Tify 2 domain. A disordered region spans residues 267–330 (GRDDDGARAR…SGRTDDAAFY (64 aa)).

This sequence belongs to the TIFY/JAZ family. Ubiquitinated. Targeted for degradation by the SCF(COI1) E3 ubiquitin ligase-proteasome pathway during jasmonate signaling.

The protein localises to the nucleus. Functionally, repressor of jasmonate responses. The protein is Protein TIFY 11f of Oryza sativa subsp. japonica (Rice).